A 160-amino-acid polypeptide reads, in one-letter code: 2-C-methyl-D-erythritol 2,4-cyclodiphosphate synthase (160 aa).

Residues Asp-9 and His-11 each contribute to the a divalent metal cation site. 4-CDP-2-C-methyl-D-erythritol 2-phosphate is bound by residues 9-11 (DVH) and 35-36 (HS). His-43 is an a divalent metal cation binding site. 4-CDP-2-C-methyl-D-erythritol 2-phosphate is bound by residues 57–59 (DIG), 62–66 (FPDTD), 101–107 (AQKPKMA), 133–136 (TTTE), Phe-140, and Arg-143.

The protein belongs to the IspF family. As to quaternary structure, homotrimer. A divalent metal cation is required as a cofactor.

It catalyses the reaction 4-CDP-2-C-methyl-D-erythritol 2-phosphate = 2-C-methyl-D-erythritol 2,4-cyclic diphosphate + CMP. Its pathway is isoprenoid biosynthesis; isopentenyl diphosphate biosynthesis via DXP pathway; isopentenyl diphosphate from 1-deoxy-D-xylulose 5-phosphate: step 4/6. In terms of biological role, involved in the biosynthesis of isopentenyl diphosphate (IPP) and dimethylallyl diphosphate (DMAPP), two major building blocks of isoprenoid compounds. Catalyzes the conversion of 4-diphosphocytidyl-2-C-methyl-D-erythritol 2-phosphate (CDP-ME2P) to 2-C-methyl-D-erythritol 2,4-cyclodiphosphate (ME-CPP) with a corresponding release of cytidine 5-monophosphate (CMP). This Geobacillus thermodenitrificans (strain NG80-2) protein is 2-C-methyl-D-erythritol 2,4-cyclodiphosphate synthase.